A 486-amino-acid polypeptide reads, in one-letter code: Shutoff alkaline exonuclease (486 aa).

The protein belongs to the herpesviridae alkaline nuclease family. In terms of assembly, forms a complex with the DNA polymerase, the DNA polymerase processivity factor, and the major DNA binding protein.

The protein resides in the host nucleus. It localises to the host cytoplasm. Functionally, plays a role in processing non linear or branched viral DNA intermediates in order to promote the production of mature packaged unit-length linear progeny viral DNA molecules. Exhibits endonuclease and exonuclease activities and accepts both double-stranded and single-stranded DNA as substrate. Exonuclease digestion of DNA is in the 5'-&gt; 3' direction and the products are 5'-monophosphate nucleosides. Additionally, forms a recombinase with the major DNA-binding protein, which displays strand exchange activity. Also acts as a cytoplasmic RNA endonuclease that induces degradation of the majority of the cellular messenger RNAs during early lytic infection. The resulting inhibition of cellular protein synthesis serves to ensure maximal viral gene expression and evasion from host immune response. Internally cleaves host mRNAs which are then degraded by the cellular exonuclease XRN1. Bypasses therefore the regulatory steps of deadenylation and decapping normally required for XRN1 activation. In addition, inhibits host inflammasome activation to promote viral lytic replication by interacting with host AIM2 and disrupting its polymerization. The chain is Shutoff alkaline exonuclease (ORF37) from Human herpesvirus 8 type P (isolate GK18) (HHV-8).